A 336-amino-acid chain; its full sequence is Ketol-acid reductoisomerase (NADP(+)) (336 aa).

The region spanning 2-181 (AKVYYEKDVM…GATRAGVLET (180 aa)) is the KARI N-terminal Rossmann domain. Residues 25-28 (YGSQ), Arg48, Ser52, and 82-85 (DELQ) each bind NADP(+). His107 is a catalytic residue. Gly133 serves as a coordination point for NADP(+). The KARI C-terminal knotted domain maps to 182–327 (TFKEETETDL…RQLREMMPFV (146 aa)). Mg(2+) contacts are provided by Asp190, Glu194, Glu226, and Glu230. Ser251 is a binding site for substrate.

This sequence belongs to the ketol-acid reductoisomerase family. Requires Mg(2+) as cofactor.

It carries out the reaction (2R)-2,3-dihydroxy-3-methylbutanoate + NADP(+) = (2S)-2-acetolactate + NADPH + H(+). It catalyses the reaction (2R,3R)-2,3-dihydroxy-3-methylpentanoate + NADP(+) = (S)-2-ethyl-2-hydroxy-3-oxobutanoate + NADPH + H(+). The protein operates within amino-acid biosynthesis; L-isoleucine biosynthesis; L-isoleucine from 2-oxobutanoate: step 2/4. Its pathway is amino-acid biosynthesis; L-valine biosynthesis; L-valine from pyruvate: step 2/4. In terms of biological role, involved in the biosynthesis of branched-chain amino acids (BCAA). Catalyzes an alkyl-migration followed by a ketol-acid reduction of (S)-2-acetolactate (S2AL) to yield (R)-2,3-dihydroxy-isovalerate. In the isomerase reaction, S2AL is rearranged via a Mg-dependent methyl migration to produce 3-hydroxy-3-methyl-2-ketobutyrate (HMKB). In the reductase reaction, this 2-ketoacid undergoes a metal-dependent reduction by NADPH to yield (R)-2,3-dihydroxy-isovalerate. In Bacillus cytotoxicus (strain DSM 22905 / CIP 110041 / 391-98 / NVH 391-98), this protein is Ketol-acid reductoisomerase (NADP(+)).